A 490-amino-acid polypeptide reads, in one-letter code: Pentatricopeptide repeat-containing protein At2g20710, mitochondrial (490 aa).

Residues 1-86 constitute a mitochondrion transit peptide; it reads MKHLLLLRLV…IKMLRKFSRF (86 aa). PPR repeat units lie at residues 138–172, 173–207, 208–243, 244–274, 280–310, 314–344, 349–379, and 384–421; these read NYHL…GFLK, GCLP…TVKP, DIFT…GLHL, DWRT…SEQM, RKHA…YKEL, YNTG…WEAG, DIRI…LVQK, and DTST…GWRP.

It belongs to the PPR family. P subfamily.

Its subcellular location is the mitochondrion. This Arabidopsis thaliana (Mouse-ear cress) protein is Pentatricopeptide repeat-containing protein At2g20710, mitochondrial.